The chain runs to 255 residues: uncharacterized protein (255 aa).

Positions 1–18 are cleaved as a signal peptide; it reads MRILIILSIILCSLFTKA.

It belongs to the MlaA family.

This is an uncharacterized protein from Rickettsia bellii (strain RML369-C).